Here is an 86-residue protein sequence, read N- to C-terminus: Cytochrome c oxidase subunit 3 (86 aa).

At 1–15 (MAHQAHSYHMVDPSP) the chain is on the mitochondrial matrix side. The chain crosses the membrane as a helical span at residues 16 to 34 (WPIFGAAAALLTTSGLVMW). The Mitochondrial intermembrane portion of the chain corresponds to 35–40 (FHYNSS). A helical transmembrane segment spans residues 41–66 (ILLAAGLLSMLLVMLQWWREIVREST). At 67–86 (FQGHHTPTVQKGLRYGMILF) the chain is on the mitochondrial matrix side.

It belongs to the cytochrome c oxidase subunit 3 family. As to quaternary structure, component of the cytochrome c oxidase (complex IV, CIV), a multisubunit enzyme composed of 14 subunits. The complex is composed of a catalytic core of 3 subunits MT-CO1, MT-CO2 and MT-CO3, encoded in the mitochondrial DNA, and 11 supernumerary subunits COX4I, COX5A, COX5B, COX6A, COX6B, COX6C, COX7A, COX7B, COX7C, COX8 and NDUFA4, which are encoded in the nuclear genome. The complex exists as a monomer or a dimer and forms supercomplexes (SCs) in the inner mitochondrial membrane with NADH-ubiquinone oxidoreductase (complex I, CI) and ubiquinol-cytochrome c oxidoreductase (cytochrome b-c1 complex, complex III, CIII), resulting in different assemblies (supercomplex SCI(1)III(2)IV(1) and megacomplex MCI(2)III(2)IV(2)).

Its subcellular location is the mitochondrion inner membrane. The enzyme catalyses 4 Fe(II)-[cytochrome c] + O2 + 8 H(+)(in) = 4 Fe(III)-[cytochrome c] + 2 H2O + 4 H(+)(out). Its function is as follows. Component of the cytochrome c oxidase, the last enzyme in the mitochondrial electron transport chain which drives oxidative phosphorylation. The respiratory chain contains 3 multisubunit complexes succinate dehydrogenase (complex II, CII), ubiquinol-cytochrome c oxidoreductase (cytochrome b-c1 complex, complex III, CIII) and cytochrome c oxidase (complex IV, CIV), that cooperate to transfer electrons derived from NADH and succinate to molecular oxygen, creating an electrochemical gradient over the inner membrane that drives transmembrane transport and the ATP synthase. Cytochrome c oxidase is the component of the respiratory chain that catalyzes the reduction of oxygen to water. Electrons originating from reduced cytochrome c in the intermembrane space (IMS) are transferred via the dinuclear copper A center (CU(A)) of subunit 2 and heme A of subunit 1 to the active site in subunit 1, a binuclear center (BNC) formed by heme A3 and copper B (CU(B)). The BNC reduces molecular oxygen to 2 water molecules using 4 electrons from cytochrome c in the IMS and 4 protons from the mitochondrial matrix. This Anas platyrhynchos (Mallard) protein is Cytochrome c oxidase subunit 3 (MT-CO3).